The primary structure comprises 389 residues: MSPPSQDWSTITDANERRKAQNRVAQRNYRSRQKLRVELAEAILYDMPSWRTAVGLKRKRWLETPQSVEDHDTNPDSATPKPSLSSQVIQYHEEGQLVQNPTDFSMSADADVTADVSSGGESSDLSLGVFTPGDDWMNAEIDWTAAMTLAGDTSASEPDLRHRAVGPGNDIHAQPPVSIPVQAASGQHRTLTAPTPAESMSLRTEPPETAVITVTSNREVPNLGDSNEGSRSISTTKQPSEFKTPVLTAIAKGKLDIARLLISSGANIDTRDMHGRTNLHYAVSRSDAKTVRSLLELGADLLMSDASGVTALHMAVGADDQDMVKLLLGWCEQQDRTASSTDHKTTLKQCINSRDGQNMTPLHLCVVMERMDMLKILLDYGADVNIGCD.

Composition is skewed to polar residues over residues methionine 1 to aspartate 13 and proline 75 to leucine 84. Disordered stretches follow at residues methionine 1–arginine 27, proline 65–leucine 84, and glutamate 219–proline 239. Positions threonine 12–glutamate 38 are basic DNA-binding region. ANK repeat units follow at residues glutamate 241–threonine 270, histidine 274–methionine 303, serine 307–arginine 336, and glutamine 357–isoleucine 386.

Belongs to the bZIP family. Highly divergent.

The protein localises to the nucleus. In terms of biological role, transcription factor that regulates the expression of the gene cluster that mediates the biosynthesis of apicidin F. Binds to the eight-base-pair motif 5'-TGACGTGA-3' called the 'Api-box' that is found in all promoters of the apicidin F cluster except in the promoter region of apf2 itself. The protein is Apicidin F cluster transcription factor apf2 of Gibberella fujikuroi (strain CBS 195.34 / IMI 58289 / NRRL A-6831) (Bakanae and foot rot disease fungus).